Here is a 354-residue protein sequence, read N- to C-terminus: NADH-quinone oxidoreductase subunit H (354 aa).

8 consecutive transmembrane segments (helical) span residues 22–42 (ILIRAVLIVVPVLLCVAYLIL), 91–111 (YLVAPLMVLMPAVAVWAVIPF), 124–144 (LLYVMAISSVGVYGVILAGWA), 162–182 (VSYEIAMGFALVTVLMVSGSL), 203–223 (LLSWNWLPLLPMFGVYFISGV), 250–270 (GMTFALFFLAEYINMIIISTM), 291–311 (IPGFFWLVIKVFLLLSVFIWI), and 326–346 (LGWKIFIPLTVAWLIIVAIWI).

Belongs to the complex I subunit 1 family. In terms of assembly, NDH-1 is composed of 14 different subunits. Subunits NuoA, H, J, K, L, M, N constitute the membrane sector of the complex.

The protein localises to the cell inner membrane. The enzyme catalyses a quinone + NADH + 5 H(+)(in) = a quinol + NAD(+) + 4 H(+)(out). NDH-1 shuttles electrons from NADH, via FMN and iron-sulfur (Fe-S) centers, to quinones in the respiratory chain. The immediate electron acceptor for the enzyme in this species is believed to be ubiquinone. Couples the redox reaction to proton translocation (for every two electrons transferred, four hydrogen ions are translocated across the cytoplasmic membrane), and thus conserves the redox energy in a proton gradient. This subunit may bind ubiquinone. The chain is NADH-quinone oxidoreductase subunit H from Cupriavidus metallidurans (strain ATCC 43123 / DSM 2839 / NBRC 102507 / CH34) (Ralstonia metallidurans).